Reading from the N-terminus, the 157-residue chain is ATP synthase subunit b (157 aa).

Residues 7–27 form a helical membrane-spanning segment; it reads LIAQLVVFFILAWVTMKFVWP.

This sequence belongs to the ATPase B chain family. In terms of assembly, F-type ATPases have 2 components, F(1) - the catalytic core - and F(0) - the membrane proton channel. F(1) has five subunits: alpha(3), beta(3), gamma(1), delta(1), epsilon(1). F(0) has three main subunits: a(1), b(2) and c(10-14). The alpha and beta chains form an alternating ring which encloses part of the gamma chain. F(1) is attached to F(0) by a central stalk formed by the gamma and epsilon chains, while a peripheral stalk is formed by the delta and b chains.

It localises to the cell inner membrane. F(1)F(0) ATP synthase produces ATP from ADP in the presence of a proton or sodium gradient. F-type ATPases consist of two structural domains, F(1) containing the extramembraneous catalytic core and F(0) containing the membrane proton channel, linked together by a central stalk and a peripheral stalk. During catalysis, ATP synthesis in the catalytic domain of F(1) is coupled via a rotary mechanism of the central stalk subunits to proton translocation. Its function is as follows. Component of the F(0) channel, it forms part of the peripheral stalk, linking F(1) to F(0). The sequence is that of ATP synthase subunit b from Aromatoleum aromaticum (strain DSM 19018 / LMG 30748 / EbN1) (Azoarcus sp. (strain EbN1)).